The sequence spans 413 residues: Arginine deiminase (413 aa).

The active-site Amidino-cysteine intermediate is the Cys403.

This sequence belongs to the arginine deiminase family.

Its subcellular location is the cytoplasm. It carries out the reaction L-arginine + H2O = L-citrulline + NH4(+). Its pathway is amino-acid degradation; L-arginine degradation via ADI pathway; carbamoyl phosphate from L-arginine: step 1/2. This is Arginine deiminase from Clostridium perfringens (strain SM101 / Type A).